Here is a 262-residue protein sequence, read N- to C-terminus: Shikimate dehydrogenase (NADP(+)) (262 aa).

Residues 15 to 17 (SRS) and T62 each bind shikimate. K66 acts as the Proton acceptor in catalysis. E78 contacts NADP(+). Positions 87 and 102 each coordinate shikimate. Residues 126-130 (GAGGA), 150-155 (NRTLAR), and M214 contribute to the NADP(+) site. Y216 lines the shikimate pocket. Position 236 (G236) interacts with NADP(+).

The protein belongs to the shikimate dehydrogenase family. In terms of assembly, homodimer.

The enzyme catalyses shikimate + NADP(+) = 3-dehydroshikimate + NADPH + H(+). Its pathway is metabolic intermediate biosynthesis; chorismate biosynthesis; chorismate from D-erythrose 4-phosphate and phosphoenolpyruvate: step 4/7. In terms of biological role, involved in the biosynthesis of the chorismate, which leads to the biosynthesis of aromatic amino acids. Catalyzes the reversible NADPH linked reduction of 3-dehydroshikimate (DHSA) to yield shikimate (SA). The chain is Shikimate dehydrogenase (NADP(+)) from Acinetobacter baumannii (strain SDF).